Consider the following 207-residue polypeptide: Ribosomal RNA small subunit methyltransferase G (207 aa).

Residues Gly-73, Leu-78, 124-125, and Arg-139 contribute to the S-adenosyl-L-methionine site; that span reads VE.

This sequence belongs to the methyltransferase superfamily. RNA methyltransferase RsmG family.

The protein localises to the cytoplasm. The catalysed reaction is guanosine(527) in 16S rRNA + S-adenosyl-L-methionine = N(7)-methylguanosine(527) in 16S rRNA + S-adenosyl-L-homocysteine. In terms of biological role, specifically methylates the N7 position of guanine in position 527 of 16S rRNA. The polypeptide is Ribosomal RNA small subunit methyltransferase G (Escherichia coli (strain SMS-3-5 / SECEC)).